The sequence spans 828 residues: Protein SEY1 homolog (828 aa).

Over 1-718 (MTEDVMNDDF…SSKNGISWKN (718 aa)) the chain is Cytoplasmic. A GB1/RHD3-type G domain is found at 44–284 (GFNYNVLSIL…VPSDGFFYYA (241 aa)). Position 54-61 (54-61 (GCQSSGKS)) interacts with GTP. The helical transmembrane segment at 719 to 739 (IPPPFWILLLLCSWNELCSVL) threads the bilayer. Topologically, residues 740–742 (RIV) are lumenal. Residues 743 to 763 (FKVQVLIPLIILGFIVVQYFS) form a helical membrane-spanning segment. Over 764-828 (HLVFGTSADA…NDSGKKAEEN (65 aa)) the chain is Cytoplasmic.

This sequence belongs to the TRAFAC class dynamin-like GTPase superfamily. GB1/RHD3 GTPase family. RHD3 subfamily.

The protein localises to the endoplasmic reticulum membrane. Its function is as follows. Probable GTP-binding protein that may be involved in cell development. This is Protein SEY1 homolog from Babesia bovis.